A 413-amino-acid chain; its full sequence is Chemotactic signal transduction system substrate-binding protein BasB (413 aa).

Positions 1–31 (MHSTTRREWLGAIGATAATGLAGCAGVGGAG) are cleaved as a signal peptide.

Its subcellular location is the cell membrane. Functionally, mediates chemotaxis towards five attractant amino acids (leucine, isoleucine, valine, methionine and cysteine). May function as a receptor that binds the amino acids and transduces a signal to BasT. Has probably no additional role in transport. The chain is Chemotactic signal transduction system substrate-binding protein BasB (basB) from Halobacterium salinarum (strain ATCC 29341 / DSM 671 / R1).